Reading from the N-terminus, the 273-residue chain is Dormancy associated translation inhibitor (273 aa).

As to quaternary structure, interacts with human TLR2.

In terms of biological role, involved in translation regulation. Can also stimulate macrophages and peripheral blood mononuclear cells (PBMC) to secrete important cytokines that may be significant in granuloma formation and its maintenance. Increases secretion of IFN-gamma, TNF-alpha, IL-1 beta and IL-8 through human Toll-like receptor 2 (TLR2) signaling pathway. The sequence is that of Dormancy associated translation inhibitor from Mycobacterium tuberculosis (strain CDC 1551 / Oshkosh).